The following is a 328-amino-acid chain: Spermatogenesis- and oogenesis-specific basic helix-loop-helix-containing protein 1 (328 aa).

In terms of domain architecture, bHLH spans 53 to 104 (SCLRRNVISERERRKRMSLSCERLRALLPQFDGRREDMASVLEMSVQFLRLA). The segment at 290-328 (EAGSALGSDVDDGTSFLLTAGPSSWPGEWGPGFRAGPPA) is disordered. A compositionally biased stretch (low complexity) spans 310–321 (GPSSWPGEWGPG).

As to quaternary structure, forms both hetero- and homodimers with SOHLH2.

The protein localises to the cytoplasm. Its subcellular location is the nucleus. Functionally, transcription regulator of both male and female germline differentiation. Suppresses genes involved in spermatogonial stem cells maintenance, and induces genes important for spermatogonial differentiation. Coordinates oocyte differentiation without affecting meiosis I. The sequence is that of Spermatogenesis- and oogenesis-specific basic helix-loop-helix-containing protein 1 (SOHLH1) from Homo sapiens (Human).